The following is a 245-amino-acid chain: Exosome complex component RRP41 (245 aa).

A2 carries the post-translational modification N-acetylalanine.

The protein belongs to the RNase PH family. In terms of assembly, component of the RNA exosome core complex (Exo-9), composed of EXOSC1, EXOSC2, EXOSC3, EXOSC4, EXOSC5, EXOSC6, EXOSC7, EXOSC8 and EXOSC9; within the complex interacts with EXOSC2, EXOSC7 and EXOSC9. The catalytically inactive RNA exosome core complex (Exo-9) associates with the catalytic subunit EXOSC10/RRP6. Exo-9 may associate with DIS3 to form the nucleolar exosome complex, or DIS3L to form the cytoplasmic exosome complex. Exo-9 is formed by a hexameric base ring consisting of the heterodimers EXOSC4-EXOSC9, EXOSC5-EXOSC8 and EXOSC6-EXOSC7, and a cap ring consisting of EXOSC1, EXOSC2 and EXOSC3. The RNA exosome complex associates with cofactors C1D/RRP47, MPHOSPH6/MPP6 and MTREX/MTR4. Interacts with DDX60. Interacts with DIS3; the interaction is direct.

The protein resides in the cytoplasm. It is found in the nucleus. The protein localises to the nucleolus. It localises to the nucleoplasm. Its function is as follows. Non-catalytic component of the RNA exosome complex which has 3'-&gt;5' exoribonuclease activity and participates in a multitude of cellular RNA processing and degradation events. In the nucleus, the RNA exosome complex is involved in proper maturation of stable RNA species such as rRNA, snRNA and snoRNA, in the elimination of RNA processing by-products and non-coding 'pervasive' transcripts, such as antisense RNA species and promoter-upstream transcripts (PROMPTs), and of mRNAs with processing defects, thereby limiting or excluding their export to the cytoplasm. The RNA exosome may be involved in Ig class switch recombination (CSR) and/or Ig variable region somatic hypermutation (SHM) by targeting AICDA deamination activity to transcribed dsDNA substrates. In the cytoplasm, the RNA exosome complex is involved in general mRNA turnover and specifically degrades inherently unstable mRNAs containing AU-rich elements (AREs) within their 3' untranslated regions, and in RNA surveillance pathways, preventing translation of aberrant mRNAs. It seems to be involved in degradation of histone mRNA. The catalytic inactive RNA exosome core complex of 9 subunits (Exo-9) is proposed to play a pivotal role in the binding and presentation of RNA for ribonucleolysis, and to serve as a scaffold for the association with catalytic subunits and accessory proteins or complexes. EXOSC4 binds to ARE-containing RNAs. This Bos taurus (Bovine) protein is Exosome complex component RRP41 (EXOSC4).